The primary structure comprises 329 residues: Serine dehydratase-like (329 aa).

At M1 the chain carries N-acetylmethionine. K48 bears the N6-(pyridoxal phosphate)lysine mark.

Belongs to the serine/threonine dehydratase family. Monomer. Homodimer. It depends on pyridoxal 5'-phosphate as a cofactor.

The catalysed reaction is L-serine = pyruvate + NH4(+). The enzyme catalyses L-threonine = 2-oxobutanoate + NH4(+). It catalyses the reaction L-glutamate = D-glutamate. With respect to regulation, serine dehydratase activity is inhibited by manganese chloride, ferrous chloride, cobalt chloride, cupric chloride, nickel chloride and zinc chloride. Glutamate racemase activity is inhibited by manganese chloride, ferrous chloride, cupric chloride and zinc chloride. Catalyzes the pyridoxal-phosphate-dependent dehydrative deamination of L-threonine and L-serine to ammonia and alpha-ketobutyrate and pyruvate, respectively. Also exhibits racemase activity towards L-glutamate and D-glutamate. This is Serine dehydratase-like (Sdsl) from Rattus norvegicus (Rat).